The primary structure comprises 83 residues: Beta-defensin 119 (83 aa).

An N-terminal signal peptide occupies residues 1-20; that stretch reads MKFLFLFLAILLAMEPVVSG. 3 disulfides stabilise this stretch: C27–C54, C34–C48, and C38–C55.

It belongs to the beta-defensin family.

The protein localises to the secreted. Its function is as follows. Has antibacterial activity. The sequence is that of Beta-defensin 119 (DEFB119) from Bos taurus (Bovine).